The sequence spans 513 residues: NAD(P)H-quinone oxidoreductase subunit 2 (513 aa).

Helical transmembrane passes span 15 to 35, 43 to 63, 80 to 100, 110 to 130, 133 to 153, 168 to 188, 211 to 231, 245 to 265, 281 to 301, 307 to 327, 335 to 355, 379 to 399, 401 to 421, and 467 to 487; these read VIWPEGILIITLMVILIGDLI, WLPYVAIAGLLAAVVALYFTW, LSIVFRAIIALSTASTVLMSI, LAEFLAIMLTATLGGMFLSGA, LVMIFISLEMLSISSYLMTGY, LLIGASSSAIFLYGVSLLYGL, LALAIALVFVIAGIAFKISAV, PTPVVAFLSVGSKAAGFALAI, FIFIALAILSMILGNVVALAQ, MLAYSSIGQAGFVMIGLTAGT, IFYLLIYLFMNLGAFACVILF, LCLSICLLSLGGIPPLAGFFG, IYLFWAGWQAGLYALVLVGLV, and VGIVLSLVATSLAGILSNPLF.

This sequence belongs to the complex I subunit 2 family. In terms of assembly, NDH-1 can be composed of about 15 different subunits; different subcomplexes with different compositions have been identified which probably have different functions.

Its subcellular location is the cellular thylakoid membrane. The catalysed reaction is a plastoquinone + NADH + (n+1) H(+)(in) = a plastoquinol + NAD(+) + n H(+)(out). It catalyses the reaction a plastoquinone + NADPH + (n+1) H(+)(in) = a plastoquinol + NADP(+) + n H(+)(out). Its function is as follows. NDH-1 shuttles electrons from an unknown electron donor, via FMN and iron-sulfur (Fe-S) centers, to quinones in the respiratory and/or the photosynthetic chain. The immediate electron acceptor for the enzyme in this species is believed to be plastoquinone. Couples the redox reaction to proton translocation, and thus conserves the redox energy in a proton gradient. Cyanobacterial NDH-1 also plays a role in inorganic carbon-concentration. The chain is NAD(P)H-quinone oxidoreductase subunit 2 from Microcystis aeruginosa (strain NIES-843 / IAM M-2473).